Here is a 1096-residue protein sequence, read N- to C-terminus: Carbamoyl phosphate synthase large chain (1096 aa).

A carboxyphosphate synthetic domain region spans residues 1 to 402; that stretch reads MPKRDDINSV…ALQKALRSLE (402 aa). Positions 129, 169, 175, 176, 208, 210, 215, 241, 242, 243, 285, and 299 each coordinate ATP. An ATP-grasp 1 domain is found at 133 to 328; that stretch reads KDLVIESGAD…IAKIAAKLAI (196 aa). Mg(2+) is bound by residues Gln285, Glu299, and Asn301. Residues Gln285, Glu299, and Asn301 each coordinate Mn(2+). The tract at residues 403–547 is oligomerization domain; the sequence is KRGSSFHWGA…YSSYDSETEI (145 aa). Residues 548-950 form a carbamoyl phosphate synthetic domain region; that stretch reads VPSDRRKVII…AFAKSQEAAF (403 aa). In terms of domain architecture, ATP-grasp 2 spans 676 to 870; that stretch reads SGILDAAGLV…LAKAASLVMV (195 aa). The ATP site is built by Arg712, Arg754, Leu756, Glu761, Gly786, Ile787, His788, Ser789, Gln829, and Glu841. Residues Gln829, Glu841, and Asn843 each contribute to the Mg(2+) site. The Mn(2+) site is built by Gln829, Glu841, and Asn843. Residues 951 to 1095 form the MGS-like domain; sequence GGLPLSGTVF…QDYAIAREAR (145 aa). The interval 951–1096 is allosteric domain; sequence GGLPLSGTVF…DYAIAREARR (146 aa).

The protein belongs to the CarB family. In terms of assembly, composed of two chains; the small (or glutamine) chain promotes the hydrolysis of glutamine to ammonia, which is used by the large (or ammonia) chain to synthesize carbamoyl phosphate. Tetramer of heterodimers (alpha,beta)4. Mg(2+) is required as a cofactor. The cofactor is Mn(2+).

The catalysed reaction is hydrogencarbonate + L-glutamine + 2 ATP + H2O = carbamoyl phosphate + L-glutamate + 2 ADP + phosphate + 2 H(+). It carries out the reaction hydrogencarbonate + NH4(+) + 2 ATP = carbamoyl phosphate + 2 ADP + phosphate + 2 H(+). Its pathway is amino-acid biosynthesis; L-arginine biosynthesis; carbamoyl phosphate from bicarbonate: step 1/1. It functions in the pathway pyrimidine metabolism; UMP biosynthesis via de novo pathway; (S)-dihydroorotate from bicarbonate: step 1/3. Its function is as follows. Large subunit of the glutamine-dependent carbamoyl phosphate synthetase (CPSase). CPSase catalyzes the formation of carbamoyl phosphate from the ammonia moiety of glutamine, carbonate, and phosphate donated by ATP, constituting the first step of 2 biosynthetic pathways, one leading to arginine and/or urea and the other to pyrimidine nucleotides. The large subunit (synthetase) binds the substrates ammonia (free or transferred from glutamine from the small subunit), hydrogencarbonate and ATP and carries out an ATP-coupled ligase reaction, activating hydrogencarbonate by forming carboxy phosphate which reacts with ammonia to form carbamoyl phosphate. The chain is Carbamoyl phosphate synthase large chain from Clavibacter sepedonicus (Clavibacter michiganensis subsp. sepedonicus).